The chain runs to 325 residues: Proto-oncogene Mas (325 aa).

At 1-36 (MDGSNVTSFVVEEPTNISTGRNASVGNAHRQIPIVH) the chain is on the extracellular side. N-linked (GlcNAc...) asparagine glycosylation is found at asparagine 5, asparagine 16, and asparagine 22. Residues 37-61 (WVIMSISPVGFVENGILLWFLCFRM) form a helical membrane-spanning segment. The Cytoplasmic segment spans residues 62–65 (RRNP). A helical membrane pass occupies residues 66–86 (FTVYITHLSIADISLLFCIFI). Residues 87–104 (LSIDYALDYELSSGHYYT) are Extracellular-facing. Residues 105-128 (IVTLSVTFLFGYNTGLYLLTAISV) traverse the membrane as a helical segment. Topologically, residues 129-149 (ERCLSVLYPIWYRCHRPKYQS) are cytoplasmic. Residues 150–172 (ALVCALLWALSCLVTTMEYVMCI) form a helical membrane-spanning segment. Residues 173-185 (DREEESHSRNDCR) are Extracellular-facing. A helical membrane pass occupies residues 186 to 206 (AVIIFIAILSFLVFTPLMLVS). Residues 207-224 (STILVVKIRKNTWASHSS) are Cytoplasmic-facing. The chain crosses the membrane as a helical span at residues 225–245 (KLYIVIMVTIIIFLIFAMPMR). Residues 246 to 263 (LLYLLYYEYWSTFGNLHH) are Extracellular-facing. Residues 264–284 (ISLLFSTINSSANPFIYFFVG) traverse the membrane as a helical segment. The Cytoplasmic segment spans residues 285-325 (SSKKKRFKESLKVVLTRAFKDEMQPRRQKDNCNTVTVETVV).

The protein belongs to the G-protein coupled receptor 1 family. As to quaternary structure, interacts with AGTR1. Interacts with FLNA (via filamin repeat 21); increases PKA-mediated phosphorylation of FLNA.

The protein localises to the cell membrane. Its function is as follows. Receptor for angiotensin 1-7. Acts specifically as a functional antagonist of AGTR1 (angiotensin-2 type 1 receptor), although it up-regulates AGTR1 receptor levels. Positive regulation of AGTR1 levels occurs through activation of the G-proteins GNA11 and GNAQ, and stimulation of the protein kinase C signaling cascade. The antagonist effect on AGTR1 function is probably due to AGTR1 being physically altered by MAS1. The chain is Proto-oncogene Mas (MAS1) from Homo sapiens (Human).